The primary structure comprises 118 residues: Small ribosomal subunit protein uS13 (118 aa).

Positions 92 to 118 (RKGLPVRGQRTKTNARTRKGPRKPIRK) are disordered.

This sequence belongs to the universal ribosomal protein uS13 family. Part of the 30S ribosomal subunit. Forms a loose heterodimer with protein S19. Forms two bridges to the 50S subunit in the 70S ribosome.

Its function is as follows. Located at the top of the head of the 30S subunit, it contacts several helices of the 16S rRNA. In the 70S ribosome it contacts the 23S rRNA (bridge B1a) and protein L5 of the 50S subunit (bridge B1b), connecting the 2 subunits; these bridges are implicated in subunit movement. Contacts the tRNAs in the A and P-sites. The sequence is that of Small ribosomal subunit protein uS13 from Pseudomonas putida (strain ATCC 700007 / DSM 6899 / JCM 31910 / BCRC 17059 / LMG 24140 / F1).